A 232-amino-acid polypeptide reads, in one-letter code: 5'-methylthioadenosine/S-adenosylhomocysteine nucleosidase (232 aa).

Glu-12 functions as the Proton acceptor in the catalytic mechanism. Substrate-binding positions include Gly-78, Ile-152, and 173 to 174; that span reads ME. Residue Asp-197 is the Proton donor of the active site.

Belongs to the PNP/UDP phosphorylase family. MtnN subfamily. As to quaternary structure, homodimer.

It catalyses the reaction S-adenosyl-L-homocysteine + H2O = S-(5-deoxy-D-ribos-5-yl)-L-homocysteine + adenine. The catalysed reaction is S-methyl-5'-thioadenosine + H2O = 5-(methylsulfanyl)-D-ribose + adenine. The enzyme catalyses 5'-deoxyadenosine + H2O = 5-deoxy-D-ribose + adenine. It participates in amino-acid biosynthesis; L-methionine biosynthesis via salvage pathway; S-methyl-5-thio-alpha-D-ribose 1-phosphate from S-methyl-5'-thioadenosine (hydrolase route): step 1/2. In terms of biological role, catalyzes the irreversible cleavage of the glycosidic bond in both 5'-methylthioadenosine (MTA) and S-adenosylhomocysteine (SAH/AdoHcy) to adenine and the corresponding thioribose, 5'-methylthioribose and S-ribosylhomocysteine, respectively. Also cleaves 5'-deoxyadenosine, a toxic by-product of radical S-adenosylmethionine (SAM) enzymes, into 5-deoxyribose and adenine. Thus, is required for in vivo function of the radical SAM enzymes biotin synthase and lipoic acid synthase, that are inhibited by 5'-deoxyadenosine accumulation. The protein is 5'-methylthioadenosine/S-adenosylhomocysteine nucleosidase of Enterobacter sp. (strain 638).